An 86-amino-acid polypeptide reads, in one-letter code: Small ribosomal subunit protein bS20 (86 aa).

Belongs to the bacterial ribosomal protein bS20 family.

Functionally, binds directly to 16S ribosomal RNA. This chain is Small ribosomal subunit protein bS20, found in Bifidobacterium longum (strain DJO10A).